The following is a 512-amino-acid chain: MATANGAVENGQPDGKPPALPRPIRNLEVKFTKIFINNDWHEPKSGRKFATYNPSTLEKICEVEEGDKPDVDKAVEAAQAAFQRGSPWRRLDALSRGQLLHQLADLIERDRAILATLETMDTGKPFLHAFFVDLEGCIKTFRYFAGWADKIQGRTIPTDDNVMCFTRHEPIGVCGAITPWNFPLLMLAWKLAPALCCGNTVVLKPAEQTPLTALYLASLIKEVGFPPGVVNIVPGFGPTVGAAISSHPQINKIAFTGSTEVGKLVKEAASRSNLKRVTLELGGRNPCIVCADADLDLAVECAHQGVFFNQGQCCTAASRVFVEEQVYGEFVRRSVEFAKKRPVGDPFDAKTEQGPQIDQKQFDKILELIESGKKEGAKLECGGSAMEDRGLFIKPTVFSDVTDNMRIAKEEIFGPVQPILKFKNLEEVIKRANSTDYGLTAAVFTKNLDKALKLASALESGTVWVNCYNAFYAQAPFGGFKMSGNGRELGEYALAEYTEVKTVTIKLDEKNP.

The interval 1–23 (MATANGAVENGQPDGKPPALPRP) is disordered. Alanine 2 carries the post-translational modification N-acetylalanine. Residues lysine 204, glutamate 207, and 257–262 (GSTEVG) contribute to the NAD(+) site. The active-site Proton acceptor is glutamate 280. Residue cysteine 314 is the Nucleophile of the active site. NAD(+) is bound by residues glutamine 361 and glutamate 411.

The protein belongs to the aldehyde dehydrogenase family. As to quaternary structure, homotetramer.

The protein resides in the cytoplasm. It carries out the reaction all-trans-retinal + NAD(+) + H2O = all-trans-retinoate + NADH + 2 H(+). The enzyme catalyses retinal + NAD(+) + H2O = retinoate + NADH + 2 H(+). The catalysed reaction is all-trans-13,14-dihydroretinal + NAD(+) + H2O = all-trans-13,14-dihydroretinoate + NADH + 2 H(+). It functions in the pathway cofactor metabolism; retinol metabolism. Functionally, catalyzes the NAD-dependent oxidation of aldehyde substrates, such as all-trans-retinal and all-trans-13,14-dihydroretinal, to their corresponding carboxylic acids, all-trans-retinoate and all-trans-13,14-dihydroretinoate, respectively. High specificity for all-trans-retinal as substrate, can also accept acetaldehyde as substrate in vitro but with lower affinity. Required for the biosynthesis of normal levels of retinoate in the embryonic ocular and nasal regions; a critical lipid in the embryonic development of the eye and the nasal region. This is Retinaldehyde dehydrogenase 3 (Aldh1a3) from Rattus norvegicus (Rat).